Consider the following 2273-residue polypeptide: Acetyl-CoA carboxylase, mitochondrial (2273 aa).

The N-terminal 104 residues, 1 to 104 (KGKTITHGQS…RGNIHKHTRL (104 aa)), are a transit peptide targeting the mitochondrion. In terms of domain architecture, Biotin carboxylation spans 134–635 (VISKILIANN…STGWLDDLIL (502 aa)). The ATP-grasp domain maps to 292-484 (KTNFVSVPDD…LPATQLQIAM (193 aa)). 332-337 (GGGGKG) is a binding site for ATP. Arginine 459 is a catalytic residue. In terms of domain architecture, Biotinyl-binding spans 763–837 (LEAELNPTQV…EAGDVIAKLT (75 aa)). Lysine 804 carries the N6-biotinyllysine modification. The CoA carboxyltransferase N-terminal domain maps to 1532–1867 (PYSVKDWLQP…KRDMSPPLLE (336 aa)). Residues 1532–2187 (PYSVKDWLQP…EGQVIKRLQK (656 aa)) form a carboxyltransferase region. Residues arginine 1776, lysine 2080, and arginine 2082 each contribute to the CoA site. Residues 1871 to 2187 (RWDRDVDFKP…EGQVIKRLQK (317 aa)) form the CoA carboxyltransferase C-terminal domain.

Biotin is required as a cofactor.

The protein localises to the mitochondrion. It carries out the reaction hydrogencarbonate + acetyl-CoA + ATP = malonyl-CoA + ADP + phosphate + H(+). The enzyme catalyses N(6)-biotinyl-L-lysyl-[protein] + hydrogencarbonate + ATP = N(6)-carboxybiotinyl-L-lysyl-[protein] + ADP + phosphate + H(+). The protein operates within lipid metabolism; malonyl-CoA biosynthesis; malonyl-CoA from acetyl-CoA: step 1/1. Functionally, catalyzes the rate-limiting reaction in the mitochondrial fatty acid synthesis (FAS) type II pathway. Responsible for the production of the mitochondrial malonyl-CoA, used for the biosynthesis of the cofactor lipoic acid. This protein carries three functions: biotin carboxyl carrier protein, biotin carboxylase, and carboxyltransferase. This Saccharomyces cerevisiae (strain ATCC 204508 / S288c) (Baker's yeast) protein is Acetyl-CoA carboxylase, mitochondrial (HFA1).